A 171-amino-acid chain; its full sequence is ATP synthase subunit b (171 aa).

A helical transmembrane segment spans residues F2–L22.

The protein belongs to the ATPase B chain family. In terms of assembly, F-type ATPases have 2 components, F(1) - the catalytic core - and F(0) - the membrane proton channel. F(1) has five subunits: alpha(3), beta(3), gamma(1), delta(1), epsilon(1). F(0) has three main subunits: a(1), b(2) and c(10-14). The alpha and beta chains form an alternating ring which encloses part of the gamma chain. F(1) is attached to F(0) by a central stalk formed by the gamma and epsilon chains, while a peripheral stalk is formed by the delta and b chains.

It is found in the cell inner membrane. Functionally, f(1)F(0) ATP synthase produces ATP from ADP in the presence of a proton or sodium gradient. F-type ATPases consist of two structural domains, F(1) containing the extramembraneous catalytic core and F(0) containing the membrane proton channel, linked together by a central stalk and a peripheral stalk. During catalysis, ATP synthesis in the catalytic domain of F(1) is coupled via a rotary mechanism of the central stalk subunits to proton translocation. Component of the F(0) channel, it forms part of the peripheral stalk, linking F(1) to F(0). The sequence is that of ATP synthase subunit b from Helicobacter pylori (strain Shi470).